The sequence spans 143 residues: Large ribosomal subunit protein uL11 (143 aa).

This sequence belongs to the universal ribosomal protein uL11 family. As to quaternary structure, part of the ribosomal stalk of the 50S ribosomal subunit. Interacts with L10 and the large rRNA to form the base of the stalk. L10 forms an elongated spine to which L12 dimers bind in a sequential fashion forming a multimeric L10(L12)X complex. One or more lysine residues are methylated.

Forms part of the ribosomal stalk which helps the ribosome interact with GTP-bound translation factors. The sequence is that of Large ribosomal subunit protein uL11 from Thiobacillus denitrificans (strain ATCC 25259 / T1).